Here is a 303-residue protein sequence, read N- to C-terminus: Acetylglutamate kinase (303 aa).

Substrate-binding positions include 76–77, Arg-98, and Asn-199; that span reads GG.

Belongs to the acetylglutamate kinase family. ArgB subfamily.

The protein resides in the cytoplasm. It carries out the reaction N-acetyl-L-glutamate + ATP = N-acetyl-L-glutamyl 5-phosphate + ADP. It participates in amino-acid biosynthesis; L-arginine biosynthesis; N(2)-acetyl-L-ornithine from L-glutamate: step 2/4. Functionally, catalyzes the ATP-dependent phosphorylation of N-acetyl-L-glutamate. This Clavibacter michiganensis subsp. michiganensis (strain NCPPB 382) protein is Acetylglutamate kinase.